The primary structure comprises 588 residues: Transcription factor 7-like 1 (588 aa).

The segment covering 1–31 (MPQLGGGGGGGGGGSGGGGGSSAGAAGGGDD) has biased composition (gly residues). The CTNNB1-binding stretch occupies residues 1-74 (MPQLGGGGGG…VKSSLVNESE (74 aa)). 3 disordered regions span residues 1–101 (MPQL…PRDY), 203–234 (SPGS…SPYY), and 409–506 (LYPT…LSLT). Over residues 67–81 (SSLVNESENQSSSSD) the composition is skewed to low complexity. Basic and acidic residues predominate over residues 83–101 (EAERRPQPVRDTFQKPRDY). A DNA-binding region (HMG box) is located at residues 346–414 (VKKPLNAFML…LHSQLYPTWS (69 aa)). Residues 421–427 (KKKKRKR) carry the Nuclear localization signal motif. 2 stretches are compositionally biased toward low complexity: residues 431–441 (LSQTQSQQQVQ) and 478–497 (SPAT…ATHS).

Belongs to the TCF/LEF family. As to quaternary structure, binds the armadillo repeat of CTNNB1 and forms a stable complex. Interacts with DAZAP2. Detected in hair follicles and skin keratinocytes, and at lower levels in stomach epithelium.

Its subcellular location is the nucleus. In terms of biological role, participates in the Wnt signaling pathway. Binds to DNA and acts as a repressor in the absence of CTNNB1, and as an activator in its presence. Necessary for the terminal differentiation of epidermal cells, the formation of keratohyalin granules and the development of the barrier function of the epidermis. Down-regulates NQO1, leading to increased mitomycin c resistance. In Homo sapiens (Human), this protein is Transcription factor 7-like 1 (TCF7L1).